A 135-amino-acid chain; its full sequence is Interleukin-4 (135 aa).

The N-terminal stretch at 1–24 (MGLTSQLIPALVCLLVCTSHFVHG) is a signal peptide. 2 disulfide bridges follow: C48–C85 and C70–C105. N-linked (GlcNAc...) asparagine glycosylation is found at N62 and N96.

It belongs to the IL-4/IL-13 family.

Its subcellular location is the secreted. Functionally, participates in at least several B-cell activation processes as well as of other cell types. It is a costimulator of DNA-synthesis. It induces the expression of class II MHC molecules on resting B-cells. It enhances both secretion and cell surface expression of IgE and IgG1. It also regulates the expression of the low affinity Fc receptor for IgE (CD23) on both lymphocytes and monocytes. Positively regulates IL31RA expression in macrophages. Stimulates autophagy in dendritic cells by interfering with mTORC1 signaling and through the induction of RUFY4. This chain is Interleukin-4 (IL4), found in Ovis aries (Sheep).